We begin with the raw amino-acid sequence, 2476 residues long: Zonadhesin (2476 aa).

The N-terminal stretch at Met1 to Ser29 is a signal peptide. Topologically, residues Phe30–Arg2418 are extracellular. 2 MAM domains span residues Pro31 to Glu144 and Pro147 to Gly312. N-linked (GlcNAc...) asparagine glycans are attached at residues Asn109 and Asn269. Disordered stretches follow at residues Pro313 to Val332, Pro358 to Thr462, and Glu537 to Ile632. A 53 X approximate heptapeptide repeats (mucin-like domain) region spans residues Ser319–Ile687. A compositionally biased stretch (low complexity) spans Pro358–Thr373. A compositionally biased stretch (pro residues) spans Thr400 to Gly412. The span at His423–Lys433 shows a compositional bias: basic and acidic residues. Residues Pro451–Thr462 show a composition bias toward low complexity. One can recognise a TIL 1 domain in the interval Cys690–Cys739. N-linked (GlcNAc...) asparagine glycosylation is found at Asn735, Asn758, and Asn833. The 55-residue stretch at Asp740–His794 folds into the VWFC 1 domain. Residues Ala799–Glu976 form the VWFD 1 domain. Cystine bridges form between Cys801-Cys936 and Cys823-Cys975. A disordered region spans residues Ser943–Pro983. The 54-residue stretch at Cys1070 to Cys1123 folds into the TIL 2 domain. Residues Gly1124–Ala1180 form the VWFC 2 domain. The N-linked (GlcNAc...) asparagine glycan is linked to Asn1154. One can recognise a VWFD 2 domain in the interval Ala1184–Phe1364. 2 cysteine pairs are disulfide-bonded: Cys1186-Cys1324 and Cys1208-Cys1363. N-linked (GlcNAc...) asparagine glycans are attached at residues Asn1329 and Asn1448. The TIL 3 domain maps to Cys1456–Cys1511. The region spanning Gly1512–Arg1568 is the VWFC 3 domain. N-linked (GlcNAc...) asparagine glycosylation is found at Asn1544, Asn1596, and Asn1654. One can recognise a VWFD 3 domain in the interval Gly1573–Gln1751. Intrachain disulfides connect Cys1575–Cys1712 and Cys1597–Cys1750. A compositionally biased stretch (basic and acidic residues) spans Asp1747–Ala1759. The disordered stretch occupies residues Asp1747–Asn1768. Asn1843 carries an N-linked (GlcNAc...) asparagine glycan. The region spanning Cys1851–Cys1907 is the TIL 4 domain. In terms of domain architecture, VWFC 4 spans Gly1908–Gln1963. Asn1965 carries N-linked (GlcNAc...) asparagine glycosylation. Positions Asn1968 to Pro2145 constitute a VWFD 4 domain. A disulfide bond links Cys1970 and Cys2107. Asn2122, Asn2165, and Asn2178 each carry an N-linked (GlcNAc...) asparagine glycan. One can recognise a TIL 5 domain in the interval Cys2257 to Cys2310. One can recognise a VWFC 5 domain in the interval Gly2311 to Phe2365. N-linked (GlcNAc...) asparagine glycosylation is found at Asn2329 and Asn2359. The EGF-like domain maps to Arg2366 to Thr2402. 3 disulfide bridges follow: Cys2370/Cys2381, Cys2375/Cys2390, and Cys2392/Cys2401. A helical transmembrane segment spans residues Val2419–Val2439. The segment at Arg2438–Ala2476 is disordered. A compositionally biased stretch (basic residues) spans Val2439–Ser2450. The Cytoplasmic portion of the chain corresponds to Ser2440–Ala2476.

As to quaternary structure, probably forms covalent oligomers. The MAM domains and the mucin-like domains are missing from the zonadhesin that binds to the egg extracellular matrix. Processing might occur during sperm maturation and/or capacitation. In testis, primarily in haploid spermatids. Not in lung, liver, heart, spleen, brain, kidney, epididymis.

The protein localises to the cell membrane. Binds in a species-specific manner to the zona pellucida of the egg. May be involved in gamete recognition and/or signaling. The polypeptide is Zonadhesin (ZAN) (Sus scrofa (Pig)).